Reading from the N-terminus, the 277-residue chain is Nickel import ATP-binding protein NikE (277 aa).

An ABC transporter domain is found at 14–253 (YRTVSLVGRS…EHPASRALQR (240 aa)). 46-53 (GRSGSGKS) lines the ATP pocket.

This sequence belongs to the ABC transporter superfamily. Nickel importer (TC 3.A.1.5.3) family. In terms of assembly, the complex is composed of two ATP-binding proteins (NikD and NikE), two transmembrane proteins (NikB and NikC) and a solute-binding protein (NikA).

The protein localises to the cell inner membrane. The enzyme catalyses Ni(2+)(out) + ATP + H2O = Ni(2+)(in) + ADP + phosphate + H(+). Part of the ABC transporter complex NikABCDE involved in nickel import. Responsible for energy coupling to the transport system. The chain is Nickel import ATP-binding protein NikE from Rhodospirillum rubrum (strain ATCC 11170 / ATH 1.1.1 / DSM 467 / LMG 4362 / NCIMB 8255 / S1).